Consider the following 235-residue polypeptide: MSIEVVEVRPHERHFGVYALKFEDGSERLATRNLTPGKRVYGERLVKWGGAEYREWNPYRSKLAAAIANGIKFVPIQEGTHILYLGAASGTTPSHMSDIVGERGLIYSVEFSPRVFREFMEKLVDQGRRNVVPILGDARFPYQYAHYVKGVDVAYIDVAQPAQAKILADNADYFLKPGGYVMLVIKAMSIDVTAPATETFKQEINTLKERGFEILETVHLEPYDTAHAMVVARKR.

S-adenosyl-L-methionine-binding positions include 91 to 92 (TT), 110 to 111 (EF), 137 to 138 (DA), and 157 to 160 (DVAQ).

It belongs to the methyltransferase superfamily. Fibrillarin family. Interacts with nop5. Component of box C/D small ribonucleoprotein (sRNP) particles that contain rpl7ae, FlpA and nop5, plus a guide RNA.

Functionally, involved in pre-rRNA and tRNA processing. Utilizes the methyl donor S-adenosyl-L-methionine to catalyze the site-specific 2'-hydroxyl methylation of ribose moieties in rRNA and tRNA. Site specificity is provided by a guide RNA that base pairs with the substrate. Methylation occurs at a characteristic distance from the sequence involved in base pairing with the guide RNA. The polypeptide is Fibrillarin-like rRNA/tRNA 2'-O-methyltransferase (Pyrobaculum neutrophilum (strain DSM 2338 / JCM 9278 / NBRC 100436 / V24Sta) (Thermoproteus neutrophilus)).